An 864-amino-acid chain; its full sequence is Nitrate reductase [NADH] (864 aa).

C139 provides a ligand contact to Mo-molybdopterin. Residues 497–572 form the Cytochrome b5 heme-binding domain; that stretch reads PRQYTMEEVA…LAQYYIGDLV (76 aa). Positions 532 and 555 each coordinate heme. The FAD-binding FR-type domain occupies 606-718; it reads RQKVKLPLIE…KGPLGHFVYD (113 aa). FAD-binding positions include 658 to 661, 675 to 679, F680, F687, 692 to 694, and T746; these read RAYT, LIKVY, and KMS.

This sequence belongs to the nitrate reductase family. In terms of assembly, homodimer. FAD serves as cofactor. Requires heme as cofactor. It depends on Mo-molybdopterin as a cofactor.

The catalysed reaction is nitrite + NAD(+) + H2O = nitrate + NADH + H(+). In terms of biological role, nitrate reductase is a key enzyme involved in the first step of nitrate assimilation in plants, fungi and bacteria. The polypeptide is Nitrate reductase [NADH] (NITA) (Volvox carteri (Green alga)).